Consider the following 952-residue polypeptide: Valine--tRNA ligase (952 aa).

The 'HIGH' region signature appears at P42–H52. Positions K554 to S558 match the 'KMSKS' region motif. K557 contacts ATP. A coiled-coil region spans residues A888–L952.

It belongs to the class-I aminoacyl-tRNA synthetase family. ValS type 1 subfamily. Monomer.

The protein resides in the cytoplasm. It carries out the reaction tRNA(Val) + L-valine + ATP = L-valyl-tRNA(Val) + AMP + diphosphate. In terms of biological role, catalyzes the attachment of valine to tRNA(Val). As ValRS can inadvertently accommodate and process structurally similar amino acids such as threonine, to avoid such errors, it has a 'posttransfer' editing activity that hydrolyzes mischarged Thr-tRNA(Val) in a tRNA-dependent manner. In Vibrio parahaemolyticus serotype O3:K6 (strain RIMD 2210633), this protein is Valine--tRNA ligase.